Reading from the N-terminus, the 410-residue chain is Dipeptidase 1 (410 aa).

The first 16 residues, M1 to A16, serve as a signal peptide directing secretion. Residues H36 and D38 each contribute to the Zn(2+) site. N-linked (GlcNAc...) asparagine glycosylation is found at N57 and N62. A disulfide bond links C87 and C170. A Zn(2+)-binding site is contributed by E141. Substrate is bound at residue H168. The Zn(2+) site is built by H214 and H235. A disulfide bridge links C242 with C274. Residue R246 participates in substrate binding. A glycan (N-linked (GlcNAc...) asparagine) is linked at N279. Residue D304 coordinates substrate. The GPI-anchor amidated serine moiety is linked to residue S384. Positions G385–L410 are cleaved as a propeptide — removed in mature form.

Belongs to the metallo-dependent hydrolases superfamily. Peptidase M19 family. As to quaternary structure, homodimer; disulfide-linked. Requires Zn(2+) as cofactor.

The protein localises to the apical cell membrane. It carries out the reaction an L-aminoacyl-L-amino acid + H2O = 2 an L-alpha-amino acid. It catalyses the reaction leukotriene D4 + H2O = leukotriene E4 + glycine. The enzyme catalyses L-cystine-bis-glycine + 2 H2O = L-cystine + 2 glycine. The catalysed reaction is a beta-lactam + H2O = a substituted beta-amino acid. It carries out the reaction glycyldehydrophenylalanine + H2O = 2,3-didehydrophenylalanine + glycine. Its activity is regulated as follows. Inhibited by L-penicillamine. Inhibited by cilastatin. Its function is as follows. Hydrolyzes a wide range of dipeptides including the conversion of leukotriene D4 to leukotriene E4. Hydrolyzes cystinyl-bis-glycine (cys-bis-gly) formed during glutathione degradation. Also possesses beta lactamase activity and hydrolytically inactivates beta-lactam antibiotics. In terms of biological role, independently of its dipeptidase activity, acts as an adhesion receptor for neutrophil recruitment from bloodstream into inflamed lungs and liver. The chain is Dipeptidase 1 (DPEP1) from Bos taurus (Bovine).